The following is a 483-amino-acid chain: Uroporphyrinogen-III C-methyltransferase (483 aa).

Belongs to the precorrin methyltransferase family.

The catalysed reaction is uroporphyrinogen III + 2 S-adenosyl-L-methionine = precorrin-2 + 2 S-adenosyl-L-homocysteine + H(+). The chain is Uroporphyrinogen-III C-methyltransferase (nasF) from Bacillus subtilis (strain 168).